We begin with the raw amino-acid sequence, 152 residues long: Transcriptional regulator MraZ (152 aa).

SpoVT-AbrB domains are found at residues 5 to 52 (ATLV…TLPE) and 81 to 124 (ASEC…DETT).

Belongs to the MraZ family. In terms of assembly, forms oligomers.

The protein resides in the cytoplasm. It localises to the nucleoid. Functionally, negatively regulates its own expression and that of the subsequent genes in the proximal part of the division and cell wall (dcw) gene cluster. Acts by binding directly to DNA. May also regulate the expression of genes outside the dcw cluster. In Enterobacter sp. (strain 638), this protein is Transcriptional regulator MraZ.